Here is a 112-residue protein sequence, read N- to C-terminus: UPF0145 protein LAF_1635 (112 aa).

Belongs to the UPF0145 family.

In Limosilactobacillus fermentum (strain NBRC 3956 / LMG 18251) (Lactobacillus fermentum), this protein is UPF0145 protein LAF_1635.